The primary structure comprises 316 residues: Cell surface superoxide dismutase [Cu-Zn] 6 (316 aa).

An N-terminal signal peptide occupies residues Met-1–Ser-18. The Cu cation site is built by His-78, His-80, and His-96. Positions 96 and 119 each coordinate Zn(2+). An N-linked (GlcNAc...) asparagine glycan is attached at Asn-128. His-159 contributes to the Cu cation binding site. Residues Asn-162 and Asn-240 are each glycosylated (N-linked (GlcNAc...) asparagine). Residues Asp-243 to His-263 are disordered. Residues Glu-249–Lys-258 show a composition bias toward basic and acidic residues. Asn-278 and Asn-281 each carry an N-linked (GlcNAc...) asparagine glycan. The GPI-anchor amidated serine moiety is linked to residue Ser-288. A propeptide spans Ser-289–Val-316 (removed in mature form).

It belongs to the Cu-Zn superoxide dismutase family. Cu cation serves as cofactor. Requires Zn(2+) as cofactor. In terms of processing, the GPI-anchor is attached to the protein in the endoplasmic reticulum and serves to target the protein to the cell surface. There, the glucosamine-inositol phospholipid moiety is cleaved off and the GPI-modified mannoprotein is covalently attached via its lipidless GPI glycan remnant to the 1,6-beta-glucan of the outer cell wall layer.

Its subcellular location is the secreted. The protein resides in the cell wall. It is found in the membrane. It carries out the reaction 2 superoxide + 2 H(+) = H2O2 + O2. Functionally, superoxide dismutases serve to convert damaging superoxide radicals, a key form of ROS, to less damaging hydrogen peroxide that can be converted into water by catalase action. May be involved protection against extracellular stress. This chain is Cell surface superoxide dismutase [Cu-Zn] 6 (SOD6), found in Candida albicans (strain SC5314 / ATCC MYA-2876) (Yeast).